A 137-amino-acid chain; its full sequence is Ribosomal RNA large subunit methyltransferase H (137 aa).

S-adenosyl-L-methionine contacts are provided by residues leucine 56, glycine 85, and 104 to 109; that span reads LSPLTL.

Belongs to the RNA methyltransferase RlmH family. Homodimer.

It is found in the cytoplasm. The catalysed reaction is pseudouridine(1915) in 23S rRNA + S-adenosyl-L-methionine = N(3)-methylpseudouridine(1915) in 23S rRNA + S-adenosyl-L-homocysteine + H(+). Functionally, specifically methylates the pseudouridine at position 1915 (m3Psi1915) in 23S rRNA. In Thermus thermophilus (strain ATCC BAA-163 / DSM 7039 / HB27), this protein is Ribosomal RNA large subunit methyltransferase H.